Here is a 244-residue protein sequence, read N- to C-terminus: 7-cyano-7-deazaguanine synthase (244 aa).

Residue 17–27 (FSGGQDSTTCL) coordinates ATP. Positions 205, 220, 223, and 226 each coordinate Zn(2+).

This sequence belongs to the QueC family. Zn(2+) serves as cofactor.

The enzyme catalyses 7-carboxy-7-deazaguanine + NH4(+) + ATP = 7-cyano-7-deazaguanine + ADP + phosphate + H2O + H(+). The protein operates within purine metabolism; 7-cyano-7-deazaguanine biosynthesis. Catalyzes the ATP-dependent conversion of 7-carboxy-7-deazaguanine (CDG) to 7-cyano-7-deazaguanine (preQ(0)). The polypeptide is 7-cyano-7-deazaguanine synthase (Bordetella parapertussis (strain 12822 / ATCC BAA-587 / NCTC 13253)).